The chain runs to 386 residues: Diaminopimelate decarboxylase (386 aa).

Lysine 46 bears the N6-(pyridoxal phosphate)lysine mark. Pyridoxal 5'-phosphate-binding positions include glycine 214 and 246–249; that span reads EIGR. Residues arginine 249, arginine 285, and tyrosine 289 each coordinate substrate. Cysteine 314 (proton donor) is an active-site residue. Positions 315 and 343 each coordinate substrate. Tyrosine 343 contributes to the pyridoxal 5'-phosphate binding site.

It belongs to the Orn/Lys/Arg decarboxylase class-II family. LysA subfamily. Homodimer. Requires pyridoxal 5'-phosphate as cofactor.

It catalyses the reaction meso-2,6-diaminopimelate + H(+) = L-lysine + CO2. It participates in amino-acid biosynthesis; L-lysine biosynthesis via DAP pathway; L-lysine from DL-2,6-diaminopimelate: step 1/1. In terms of biological role, specifically catalyzes the decarboxylation of meso-diaminopimelate (meso-DAP) to L-lysine. This Thermotoga maritima (strain ATCC 43589 / DSM 3109 / JCM 10099 / NBRC 100826 / MSB8) protein is Diaminopimelate decarboxylase.